A 152-amino-acid chain; its full sequence is Xanthine-guanine phosphoribosyltransferase (152 aa).

5-phospho-alpha-D-ribose 1-diphosphate contacts are provided by residues 37-38, Arg69, and 88-96; these read RG and DDLVDSGDT. Residue Arg69 coordinates GMP. Asp89 serves as a coordination point for Mg(2+). Positions 92 and 135 each coordinate guanine. Xanthine-binding residues include Asp92 and Ile135. GMP-binding positions include 92-96 and 134-135; these read DSGDT and WI.

Belongs to the purine/pyrimidine phosphoribosyltransferase family. XGPT subfamily. As to quaternary structure, homotetramer. It depends on Mg(2+) as a cofactor.

It is found in the cell inner membrane. It carries out the reaction GMP + diphosphate = guanine + 5-phospho-alpha-D-ribose 1-diphosphate. The catalysed reaction is XMP + diphosphate = xanthine + 5-phospho-alpha-D-ribose 1-diphosphate. The enzyme catalyses IMP + diphosphate = hypoxanthine + 5-phospho-alpha-D-ribose 1-diphosphate. It participates in purine metabolism; GMP biosynthesis via salvage pathway; GMP from guanine: step 1/1. It functions in the pathway purine metabolism; XMP biosynthesis via salvage pathway; XMP from xanthine: step 1/1. Its function is as follows. Purine salvage pathway enzyme that catalyzes the transfer of the ribosyl-5-phosphate group from 5-phospho-alpha-D-ribose 1-diphosphate (PRPP) to the N9 position of the 6-oxopurines guanine and xanthine to form the corresponding ribonucleotides GMP (guanosine 5'-monophosphate) and XMP (xanthosine 5'-monophosphate), with the release of PPi. To a lesser extent, also acts on hypoxanthine. This is Xanthine-guanine phosphoribosyltransferase from Aliivibrio fischeri (strain ATCC 700601 / ES114) (Vibrio fischeri).